We begin with the raw amino-acid sequence, 733 residues long: Phosphoribosylformylglycinamidine synthase subunit PurL (733 aa).

His-41 is an active-site residue. ATP is bound by residues Tyr-44 and Lys-83. Glu-85 contacts Mg(2+). Substrate is bound by residues 86 to 89 and Arg-108; that span reads SHNH. Residue His-87 is the Proton acceptor of the active site. Position 109 (Asp-109) interacts with Mg(2+). Residues 212–232 are disordered; the sequence is GASFASQELSEESEEKRPSVQ. Gln-232 contacts substrate. Asp-260 provides a ligand contact to Mg(2+). Position 304–306 (304–306) interacts with substrate; sequence ESQ. ATP is bound by residues Asp-488 and Gly-525. Mg(2+) is bound at residue Asn-526. Residue Ser-528 participates in substrate binding.

The protein belongs to the FGAMS family. Monomer. Part of the FGAM synthase complex composed of 1 PurL, 1 PurQ and 2 PurS subunits.

It is found in the cytoplasm. It carries out the reaction N(2)-formyl-N(1)-(5-phospho-beta-D-ribosyl)glycinamide + L-glutamine + ATP + H2O = 2-formamido-N(1)-(5-O-phospho-beta-D-ribosyl)acetamidine + L-glutamate + ADP + phosphate + H(+). It functions in the pathway purine metabolism; IMP biosynthesis via de novo pathway; 5-amino-1-(5-phospho-D-ribosyl)imidazole from N(2)-formyl-N(1)-(5-phospho-D-ribosyl)glycinamide: step 1/2. Part of the phosphoribosylformylglycinamidine synthase complex involved in the purines biosynthetic pathway. Catalyzes the ATP-dependent conversion of formylglycinamide ribonucleotide (FGAR) and glutamine to yield formylglycinamidine ribonucleotide (FGAM) and glutamate. The FGAM synthase complex is composed of three subunits. PurQ produces an ammonia molecule by converting glutamine to glutamate. PurL transfers the ammonia molecule to FGAR to form FGAM in an ATP-dependent manner. PurS interacts with PurQ and PurL and is thought to assist in the transfer of the ammonia molecule from PurQ to PurL. In Thermoanaerobacter sp. (strain X514), this protein is Phosphoribosylformylglycinamidine synthase subunit PurL.